The sequence spans 264 residues: Glutamate racemase (264 aa).

Substrate-binding positions include 9-10 and 41-42; these read DS and YG. C72 functions as the Proton donor/acceptor in the catalytic mechanism. 73–74 lines the substrate pocket; it reads NT. Residue C183 is the Proton donor/acceptor of the active site. 184–185 contacts substrate; the sequence is TH.

This sequence belongs to the aspartate/glutamate racemases family.

The catalysed reaction is L-glutamate = D-glutamate. The protein operates within cell wall biogenesis; peptidoglycan biosynthesis. Its function is as follows. Provides the (R)-glutamate required for cell wall biosynthesis. The polypeptide is Glutamate racemase (Geobacillus kaustophilus (strain HTA426)).